The following is a 1925-amino-acid chain: Plexin-D1 (1925 aa).

Low complexity predominate over residues 1–21 (MARRAAGGAPPSARAAAAVPL). The interval 1–26 (MARRAAGGAPPSARAAAAVPLRPRPH) is disordered. Residues 1 to 48 (MARRAAGGAPPSARAAAAVPLRPRPHSRGPGLLPLPLLLLLGAARAGA) form the signal peptide. One can recognise a Sema domain in the interval 49-548 (LEIQRRFPSP…TSHQMARVKV (500 aa)). At 49-1271 (LEIQRRFPSP…TLQLGGSETA (1223 aa)) the chain is on the extracellular side. Cystine bridges form between Cys106-Cys116 and Cys142-Cys150. N-linked (GlcNAc...) asparagine glycans are attached at residues Asn157 and Asn226. 2 disulfide bridges follow: Cys324–Cys447 and Cys347–Cys391. Residue Asn483 is glycosylated (N-linked (GlcNAc...) asparagine). Disulfide bonds link Cys551–Cys568, Cys557–Cys602, Cys560–Cys577, Cys571–Cys583, and Cys639–Cys663. IPT/TIG domains lie at 893–977 (PEIR…SREQ), 983–1065 (PTVH…NLTF), and 1071–1145 (PVIT…FING). Residue Asn967 is glycosylated (N-linked (GlcNAc...) asparagine). An N-linked (GlcNAc...) asparagine glycan is attached at Asn1120. Residues 1272-1292 (IVVSIVICSVLLLLSVVALFV) form a helical membrane-spanning segment. Residues 1293–1925 (FCTKSRRAER…NNIYECYSEA (633 aa)) lie on the Cytoplasmic side of the membrane.

Belongs to the plexin family. As to quaternary structure, interacts with NRP1 and SEMA4A. Interacts with SH3BP1; they dissociate upon SEMA3E binding to PLXND1 allowing SH3BP1 to transduce downstream signal through RAC1 inactivation. In terms of tissue distribution, detected in embryonic heart and vascular endothelium, brain, dorsal root ganglia, adrenal gland, lung mesenchyme, small intestine and in the ossification centers of vertebral bodies.

It localises to the cell membrane. Its subcellular location is the cell projection. The protein resides in the lamellipodium membrane. Functionally, cell surface receptor for SEMA4A and for class 3 semaphorins, such as SEMA3A, SEMA3C and SEMA3E. Plays an important role in cell-cell signaling, and in regulating the migration of a wide spectrum of cell types. Regulates the migration of thymocytes in the medulla. Regulates endothelial cell migration. Plays an important role in ensuring the specificity of synapse formation. Mediates anti-angiogenic signaling in response to SEMA3E. Required for normal development of the heart and vasculature. This is Plexin-D1 (Plxnd1) from Mus musculus (Mouse).